Reading from the N-terminus, the 546-residue chain is CTP synthase (546 aa).

The interval 1–266 is amidoligase domain; it reads MTTNYIFVTG…DDLVCQRFGI (266 aa). A CTP-binding site is contributed by serine 14. Serine 14 serves as a coordination point for UTP. ATP contacts are provided by residues 15 to 20 and aspartate 72; that span reads SLGKGI. Mg(2+)-binding residues include aspartate 72 and glutamate 140. CTP is bound by residues 147 to 149, 187 to 192, and lysine 223; these read DIE and KTKPTQ. UTP is bound by residues 187–192 and lysine 223; that span reads KTKPTQ. 239-241 contributes to the ATP binding site; it reads KDV. Positions 291–542 constitute a Glutamine amidotransferase type-1 domain; it reads VIGMVGKYIE…VKAAGESVRG (252 aa). Glycine 352 contributes to the L-glutamine binding site. The active-site Nucleophile; for glutamine hydrolysis is the cysteine 379. Residues 380 to 383, glutamate 403, and arginine 470 each bind L-glutamine; that span reads LGMQ. Catalysis depends on residues histidine 515 and glutamate 517.

This sequence belongs to the CTP synthase family. As to quaternary structure, homotetramer.

It catalyses the reaction UTP + L-glutamine + ATP + H2O = CTP + L-glutamate + ADP + phosphate + 2 H(+). It carries out the reaction L-glutamine + H2O = L-glutamate + NH4(+). The catalysed reaction is UTP + NH4(+) + ATP = CTP + ADP + phosphate + 2 H(+). Its pathway is pyrimidine metabolism; CTP biosynthesis via de novo pathway; CTP from UDP: step 2/2. With respect to regulation, allosterically activated by GTP, when glutamine is the substrate; GTP has no effect on the reaction when ammonia is the substrate. The allosteric effector GTP functions by stabilizing the protein conformation that binds the tetrahedral intermediate(s) formed during glutamine hydrolysis. Inhibited by the product CTP, via allosteric rather than competitive inhibition. In terms of biological role, catalyzes the ATP-dependent amination of UTP to CTP with either L-glutamine or ammonia as the source of nitrogen. Regulates intracellular CTP levels through interactions with the four ribonucleotide triphosphates. The polypeptide is CTP synthase (Aliivibrio fischeri (strain MJ11) (Vibrio fischeri)).